The following is a 211-amino-acid chain: Large ribosomal subunit protein uL4 (211 aa).

Over residues 46–55 (GNHATKTRSM) the composition is skewed to polar residues. The interval 46–89 (GNHATKTRSMVSGGGKKPWSQKGTGRARQGSTRAPHWVGGGTVH) is disordered.

The protein belongs to the universal ribosomal protein uL4 family. As to quaternary structure, part of the 50S ribosomal subunit.

In terms of biological role, one of the primary rRNA binding proteins, this protein initially binds near the 5'-end of the 23S rRNA. It is important during the early stages of 50S assembly. It makes multiple contacts with different domains of the 23S rRNA in the assembled 50S subunit and ribosome. Its function is as follows. Forms part of the polypeptide exit tunnel. This chain is Large ribosomal subunit protein uL4, found in Leptospira interrogans serogroup Icterohaemorrhagiae serovar copenhageni (strain Fiocruz L1-130).